A 744-amino-acid chain; its full sequence is Phosphoribosylformylglycinamidine synthase subunit PurL (744 aa).

Histidine 50 is a catalytic residue. Residues tyrosine 53 and lysine 92 each coordinate ATP. Residue glutamate 94 coordinates Mg(2+). Substrate contacts are provided by residues serine 95–histidine 98 and arginine 117. The Proton acceptor role is filled by histidine 96. Mg(2+) is bound at residue aspartate 118. Glutamine 241 is a binding site for substrate. Aspartate 269 provides a ligand contact to Mg(2+). Glutamate 313–glutamine 315 provides a ligand contact to substrate. Residues aspartate 495 and glycine 532 each contribute to the ATP site. Asparagine 533 contributes to the Mg(2+) binding site. Serine 535 is a substrate binding site.

This sequence belongs to the FGAMS family. Monomer. Part of the FGAM synthase complex composed of 1 PurL, 1 PurQ and 2 PurS subunits.

It localises to the cytoplasm. The enzyme catalyses N(2)-formyl-N(1)-(5-phospho-beta-D-ribosyl)glycinamide + L-glutamine + ATP + H2O = 2-formamido-N(1)-(5-O-phospho-beta-D-ribosyl)acetamidine + L-glutamate + ADP + phosphate + H(+). It participates in purine metabolism; IMP biosynthesis via de novo pathway; 5-amino-1-(5-phospho-D-ribosyl)imidazole from N(2)-formyl-N(1)-(5-phospho-D-ribosyl)glycinamide: step 1/2. Its function is as follows. Part of the phosphoribosylformylglycinamidine synthase complex involved in the purines biosynthetic pathway. Catalyzes the ATP-dependent conversion of formylglycinamide ribonucleotide (FGAR) and glutamine to yield formylglycinamidine ribonucleotide (FGAM) and glutamate. The FGAM synthase complex is composed of three subunits. PurQ produces an ammonia molecule by converting glutamine to glutamate. PurL transfers the ammonia molecule to FGAR to form FGAM in an ATP-dependent manner. PurS interacts with PurQ and PurL and is thought to assist in the transfer of the ammonia molecule from PurQ to PurL. This Rhizobium johnstonii (strain DSM 114642 / LMG 32736 / 3841) (Rhizobium leguminosarum bv. viciae) protein is Phosphoribosylformylglycinamidine synthase subunit PurL.